Here is a 391-residue protein sequence, read N- to C-terminus: Chorismate synthase (391 aa).

Positions 39 and 45 each coordinate NADP(+). Residues 133-135 (RAS), 254-255 (QA), Gly-299, 314-318 (KPIAT), and Arg-340 contribute to the FMN site.

Belongs to the chorismate synthase family. Homotetramer. It depends on FMNH2 as a cofactor.

It catalyses the reaction 5-O-(1-carboxyvinyl)-3-phosphoshikimate = chorismate + phosphate. It participates in metabolic intermediate biosynthesis; chorismate biosynthesis; chorismate from D-erythrose 4-phosphate and phosphoenolpyruvate: step 7/7. Catalyzes the anti-1,4-elimination of the C-3 phosphate and the C-6 proR hydrogen from 5-enolpyruvylshikimate-3-phosphate (EPSP) to yield chorismate, which is the branch point compound that serves as the starting substrate for the three terminal pathways of aromatic amino acid biosynthesis. This reaction introduces a second double bond into the aromatic ring system. The sequence is that of Chorismate synthase from Symbiobacterium thermophilum (strain DSM 24528 / JCM 14929 / IAM 14863 / T).